The primary structure comprises 334 residues: Holliday junction branch migration complex subunit RuvB (334 aa).

The interval A4–Y184 is large ATPase domain (RuvB-L). Residues I23, R24, G65, K68, T69, T70, E131–Y133, R174, Y184, and R221 contribute to the ATP site. T69 contacts Mg(2+). Residues Q185–D255 form a small ATPAse domain (RuvB-S) region. Residues A258 to E334 form a head domain (RuvB-H) region. DNA contacts are provided by R294, R313, and R318.

It belongs to the RuvB family. As to quaternary structure, homohexamer. Forms an RuvA(8)-RuvB(12)-Holliday junction (HJ) complex. HJ DNA is sandwiched between 2 RuvA tetramers; dsDNA enters through RuvA and exits via RuvB. An RuvB hexamer assembles on each DNA strand where it exits the tetramer. Each RuvB hexamer is contacted by two RuvA subunits (via domain III) on 2 adjacent RuvB subunits; this complex drives branch migration. In the full resolvosome a probable DNA-RuvA(4)-RuvB(12)-RuvC(2) complex forms which resolves the HJ.

Its subcellular location is the cytoplasm. It carries out the reaction ATP + H2O = ADP + phosphate + H(+). In terms of biological role, the RuvA-RuvB-RuvC complex processes Holliday junction (HJ) DNA during genetic recombination and DNA repair, while the RuvA-RuvB complex plays an important role in the rescue of blocked DNA replication forks via replication fork reversal (RFR). RuvA specifically binds to HJ cruciform DNA, conferring on it an open structure. The RuvB hexamer acts as an ATP-dependent pump, pulling dsDNA into and through the RuvAB complex. RuvB forms 2 homohexamers on either side of HJ DNA bound by 1 or 2 RuvA tetramers; 4 subunits per hexamer contact DNA at a time. Coordinated motions by a converter formed by DNA-disengaged RuvB subunits stimulates ATP hydrolysis and nucleotide exchange. Immobilization of the converter enables RuvB to convert the ATP-contained energy into a lever motion, pulling 2 nucleotides of DNA out of the RuvA tetramer per ATP hydrolyzed, thus driving DNA branch migration. The RuvB motors rotate together with the DNA substrate, which together with the progressing nucleotide cycle form the mechanistic basis for DNA recombination by continuous HJ branch migration. Branch migration allows RuvC to scan DNA until it finds its consensus sequence, where it cleaves and resolves cruciform DNA. In Edwardsiella ictaluri (strain 93-146), this protein is Holliday junction branch migration complex subunit RuvB.